The primary structure comprises 301 residues: MRPALTDYQHLASGKVRELYRIDGGHLLFVATDRISAYDHILKSEIPDKGRVLTAMSVFFFDYLSRTAAVSNHLAGPPDDERIPEEVLGRALVVEQLEMLPVEAVARGYLTGSGLIDYQQTGTVCGIALPSGLVEASRFDEPLFTPATKAELGEHDVNISFDDVVGLIGAERAEELRDRTLRTYSQGAAHALTRGIIVADTKFEFGVDARGELKLADEVFTPDSSRYWRADDYAEGQVQNSFDKQFVRNWLTGPDSGWDRHGDQPPPPLPPDIVDATRARYIEAYERISGLRFDDWIGVSA.

This sequence belongs to the SAICAR synthetase family.

The enzyme catalyses 5-amino-1-(5-phospho-D-ribosyl)imidazole-4-carboxylate + L-aspartate + ATP = (2S)-2-[5-amino-1-(5-phospho-beta-D-ribosyl)imidazole-4-carboxamido]succinate + ADP + phosphate + 2 H(+). The protein operates within purine metabolism; IMP biosynthesis via de novo pathway; 5-amino-1-(5-phospho-D-ribosyl)imidazole-4-carboxamide from 5-amino-1-(5-phospho-D-ribosyl)imidazole-4-carboxylate: step 1/2. The protein is Phosphoribosylaminoimidazole-succinocarboxamide synthase of Mycolicibacterium vanbaalenii (strain DSM 7251 / JCM 13017 / BCRC 16820 / KCTC 9966 / NRRL B-24157 / PYR-1) (Mycobacterium vanbaalenii).